The following is a 632-amino-acid chain: Arginine--tRNA ligase (632 aa).

Positions A129–S139 match the 'HIGH' region motif.

This sequence belongs to the class-I aminoacyl-tRNA synthetase family.

It localises to the cytoplasm. The enzyme catalyses tRNA(Arg) + L-arginine + ATP = L-arginyl-tRNA(Arg) + AMP + diphosphate. In Korarchaeum cryptofilum (strain OPF8), this protein is Arginine--tRNA ligase.